An 83-amino-acid polypeptide reads, in one-letter code: Small ribosomal subunit protein bS16 (83 aa).

Belongs to the bacterial ribosomal protein bS16 family.

This is Small ribosomal subunit protein bS16 from Pseudomonas putida (strain W619).